An 856-amino-acid polypeptide reads, in one-letter code: Glucose transport transcription regulator RGT1 (856 aa).

Over residues 1–13 (MNGATATATAAVG) the composition is skewed to low complexity. Residues 1–42 (MNGATATATAAVGAEEEGGAREGSRRRDSVESAGDGRRRTKV) form a disordered region. Positions 18–37 (GGAREGSRRRDSVESAGDGR) are enriched in basic and acidic residues. The zn(2)-C6 fungal-type DNA-binding region spans 46-75 (CDQCRRKKIKCEYQEDAQSCSGCRKNSERC). Disordered stretches follow at residues 83–121 (KRGP…KAAP), 168–244 (QRRS…QQLP), and 261–330 (TSAS…PADP). Over residues 99–117 (GARETEGARGELDTSRADG) the composition is skewed to basic and acidic residues. The segment covering 168 to 183 (QRRSSLESVNSDASGP) has biased composition (polar residues). Composition is skewed to low complexity over residues 184 to 207 (QSQQ…SRSY), 261 to 270 (TSASSQSVQL), and 277 to 294 (STSL…AYSP). Residues 303–312 (ESLTTPTAGS) are compositionally biased toward polar residues.

It belongs to the EDS1/RGT1 family.

The protein localises to the nucleus. It localises to the cytoplasm. In terms of biological role, glucose-responsive transcription factor that regulates expression of several glucose transporter (HXT) genes in response to glucose. In the absence of glucose, it functions as a transcriptional repressor, whereas high concentrations of glucose cause it to function as a transcriptional activator. In cells growing on low levels of glucose, has a neutral role, neither repressing nor activating transcription. This Eremothecium gossypii (strain ATCC 10895 / CBS 109.51 / FGSC 9923 / NRRL Y-1056) (Yeast) protein is Glucose transport transcription regulator RGT1 (RGT1).